The primary structure comprises 417 residues: Ankyrin repeat and SAM domain-containing protein 4B (417 aa).

The mediates localization to microvilli stretch occupies residues 1–252 (MSTRYHQAAS…SGDFKEKLQL (252 aa)). 3 ANK repeats span residues 31–60 (DGMT…DPDR), 64–93 (WGNT…NIFA), and 97–126 (DLQT…AQNI). Residues 130–164 (KKVTRLKEQAQKNARRQIKECERLQEKHQNKMAHT) adopt a coiled-coil conformation. The segment at 151–195 (ERLQEKHQNKMAHTYSKEESGTLSSSKGTFSRSSPSNASAPGTFG) is disordered. A compositionally biased stretch (polar residues) spans 171–190 (GTLSSSKGTFSRSSPSNASA). Residues 253-346 (SAEEDGSVHH…EWEEDVVDAT (94 aa)) are mediates interaction with MYO7B. S283 carries the post-translational modification Phosphoserine. The tract at residues 305–330 (RQGASEADEGAADEEGEENGLKDDLP) is disordered. A compositionally biased stretch (acidic residues) spans 310–322 (EADEGAADEEGEE). The SAM domain occupies 351–403 (FLLSQHLEEFLPIFKREQIDLEALLLCSDEDLQSIQMQLGPRKKVLNAINRRK). Positions 415–417 (TSL) match the PDZ-binding; mediates interaction with USH1C motif.

In terms of assembly, part of the IMAC/intermicrovillar adhesion complex/intermicrovillar tip-link complex composed of ANKS4B, MYO7B, USH1C, CDHR2 and CDHR5. Interacts with USH1C; the interaction is direct and is required for ANKS4B localization to the tip of microvilli. Interacts with MYO7B; the interaction is direct. May interact with HSPA5. Expressed in kidney and small intestine.

It is found in the cell projection. Its subcellular location is the microvillus. As part of the intermicrovillar adhesion complex/IMAC plays a role in epithelial brush border differentiation, controlling microvilli organization and length. Plays a role in assembly of the complex. May play a role in cellular response to endoplasmic reticulum stress. The sequence is that of Ankyrin repeat and SAM domain-containing protein 4B from Homo sapiens (Human).